We begin with the raw amino-acid sequence, 1684 residues long: Latrophilin Cirl (1684 aa).

Residues 1-765 (MASNNYIQIM…LFTMFDGNMR (765 aa)) lie on the Extracellular side of the membrane. Residues 21–110 (ACEGKKLTIE…KYLEAHYQCV (90 aa)) enclose the SUEL-type lectin domain. 4 N-linked (GlcNAc...) asparagine glycosylation sites follow: N138, N251, N297, and N336. Positions 181-300 (PPATHATPPG…GPSVSSNGSA (120 aa)) are disordered. Composition is skewed to polar residues over residues 250–260 (SNATAPSNTRI) and 278–300 (KSSP…NGSA). The segment at 370 to 391 (SFDEDDEEMAGTSTTTPMSTSS) is disordered. Residues 381–391 (TSTTTPMSTSS) show a composition bias toward low complexity. N-linked (GlcNAc...) asparagine glycosylation is found at N396, N653, N701, and N728. Residues 559–752 (RSVVQKVKNI…AILMDVVDEH (194 aa)) enclose the GAIN-B domain. Cystine bridges form between C707/C734 and C722/C736. Residues 707 to 752 (CVFWNYIDHAWSANGCSLESTNRTHSVCSCNHLTNFAILMDVVDEH) are GPS. A helical membrane pass occupies residues 766–786 (IFIYISIAICVVFIVIALLTL). At 787-799 (KLFNGVFVKSART) the chain is on the cytoplasmic side. The chain crosses the membrane as a helical span at residues 800-820 (SIYINIYICLLAIELLFLLGI). The Extracellular segment spans residues 821–826 (EQTETS). A helical transmembrane segment spans residues 827–847 (IFCGFITVFLHCAILSGTSWF). The Cytoplasmic segment spans residues 848–873 (CYEAFHSYSTLTSDELLLEVDQTPKV). A helical membrane pass occupies residues 874-894 (NCYYLLSYGLSLSVVAISLVI). The Extracellular segment spans residues 895–918 (NPSTYTQNDYCVLMEANAVFYATF). Residues 919–939 (VAPVLIFFMAAIGYTFLSWII) traverse the membrane as a helical segment. Topologically, residues 940 to 966 (MCRKSRTGLKTKEHTRLATVRFDIRCS) are cytoplasmic. The chain crosses the membrane as a helical span at residues 967 to 987 (FVFFLLLSAVWCSAYFYLRGA). Topologically, residues 988-994 (KMDEDVT) are extracellular. The helical transmembrane segment at 995-1015 (GIYGYNFICFNTLLGLYIFVF) threads the bilayer. At 1016 to 1684 (HCIQNEKIRR…VRCYLEPLAK (669 aa)) the chain is on the cytoplasmic side. Positions 1080-1100 (PLGTNDDAHDEQQQQQHMSAT) are disordered. Phosphoserine is present on residues S1156, S1247, and S1254. Disordered stretches follow at residues 1228–1255 (KPNS…LHSR), 1270–1353 (KTKP…APPP), 1441–1520 (SRYG…LPPQ), and 1587–1669 (SMRG…SAML). Low complexity predominate over residues 1298 to 1314 (QQQQQLRQQRQQQQQQL). Phosphoserine occurs at positions 1315 and 1316. Over residues 1328-1348 (LHLQHQQQQQQQRRAGGQQQL) the composition is skewed to low complexity. The span at 1455–1466 (RNQQQQQHSLAQ) shows a compositional bias: polar residues. 2 stretches are compositionally biased toward acidic residues: residues 1476 to 1489 (DEDD…EETT) and 1499 to 1512 (CDEE…DMED). Positions 1631–1654 (QQLQKLSPQSTTSSSSHTSHSNPH) are enriched in low complexity.

It belongs to the G-protein coupled receptor 2 family. LN-TM7 subfamily. In terms of assembly, forms a heterodimer, consisting of a large extracellular region non-covalently linked to a seven-transmembrane moiety. In terms of processing, proteolytically cleaved into 2 subunits, an extracellular subunit and a seven-transmembrane subunit.

It is found in the cell membrane. The protein is Latrophilin Cirl of Drosophila persimilis (Fruit fly).